A 305-amino-acid chain; its full sequence is GTPase Era (305 aa).

The 171-residue stretch at 11–181 folds into the Era-type G domain; that stretch reads RSGFISFVGR…LDVITRLLPE (171 aa). Residues 19–26 are G1; sequence GRPNTGKS. 19–26 contacts GTP; it reads GRPNTGKS. The interval 45–49 is G2; that stretch reads ETTRH. Residues 66-69 form a G3 region; that stretch reads DTPG. Residues 66–70 and 130–133 contribute to the GTP site; these read DTPGL and TKVD. The interval 130–133 is G4; that stretch reads TKVD. The segment at 160–162 is G5; sequence VSA. Residues 212–291 enclose the KH type-2 domain; the sequence is LKDELPHSVA…YLDLRIKVLK (80 aa).

Belongs to the TRAFAC class TrmE-Era-EngA-EngB-Septin-like GTPase superfamily. Era GTPase family. As to quaternary structure, monomer.

The protein resides in the cytoplasm. It is found in the cell membrane. An essential GTPase that binds both GDP and GTP, with rapid nucleotide exchange. Plays a role in 16S rRNA processing and 30S ribosomal subunit biogenesis and possibly also in cell cycle regulation and energy metabolism. This is GTPase Era from Corynebacterium diphtheriae (strain ATCC 700971 / NCTC 13129 / Biotype gravis).